Here is a 293-residue protein sequence, read N- to C-terminus: Formamidopyrimidine-DNA glycosylase (293 aa).

The active-site Schiff-base intermediate with DNA is Pro-2. Glu-3 functions as the Proton donor in the catalytic mechanism. The active-site Proton donor; for beta-elimination activity is the Lys-58. DNA contacts are provided by His-104, Arg-127, and Arg-170. An FPG-type zinc finger spans residues 257 to 293; sequence SVYGREGKPCRNPACGGTVERVVQSGRSTFFCASCQT. The active-site Proton donor; for delta-elimination activity is Arg-283.

Belongs to the FPG family. In terms of assembly, monomer. Requires Zn(2+) as cofactor.

It carries out the reaction Hydrolysis of DNA containing ring-opened 7-methylguanine residues, releasing 2,6-diamino-4-hydroxy-5-(N-methyl)formamidopyrimidine.. It catalyses the reaction 2'-deoxyribonucleotide-(2'-deoxyribose 5'-phosphate)-2'-deoxyribonucleotide-DNA = a 3'-end 2'-deoxyribonucleotide-(2,3-dehydro-2,3-deoxyribose 5'-phosphate)-DNA + a 5'-end 5'-phospho-2'-deoxyribonucleoside-DNA + H(+). Functionally, involved in base excision repair of DNA damaged by oxidation or by mutagenic agents. Acts as a DNA glycosylase that recognizes and removes damaged bases. Has a preference for oxidized purines, such as 7,8-dihydro-8-oxoguanine (8-oxoG). Has AP (apurinic/apyrimidinic) lyase activity and introduces nicks in the DNA strand. Cleaves the DNA backbone by beta-delta elimination to generate a single-strand break at the site of the removed base with both 3'- and 5'-phosphates. In Brucella ovis (strain ATCC 25840 / 63/290 / NCTC 10512), this protein is Formamidopyrimidine-DNA glycosylase.